A 372-amino-acid chain; its full sequence is N-methyl-L-tryptophan oxidase (372 aa).

Residue D4–H34 coordinates FAD. C308 carries the S-8alpha-FAD cysteine modification.

The protein belongs to the MSOX/MTOX family. MTOX subfamily. Monomer. The cofactor is FAD.

The catalysed reaction is N(alpha)-methyl-L-tryptophan + O2 + H2O = L-tryptophan + formaldehyde + H2O2. In terms of biological role, catalyzes the oxidative demethylation of N-methyl-L-tryptophan. The chain is N-methyl-L-tryptophan oxidase from Shigella sonnei (strain Ss046).